A 506-amino-acid polypeptide reads, in one-letter code: Chromosomal replication initiator protein DnaA (506 aa).

A domain I, interacts with DnaA modulators region spans residues 1–77 (MECATTATTP…IWAEESGAKR (77 aa)). Residues 77-162 (RRVDLAVRNA…AVAGDVASGS (86 aa)) form a domain II region. 2 stretches are compositionally biased toward basic and acidic residues: residues 103–112 (TERTDMHSGD) and 121–142 (SDGRSTDARGADGRGSDARAVE). The segment at 103–142 (TERTDMHSGDTRQQSARISDGRSTDARGADGRGSDARAVE) is disordered. Positions 163 to 384 (PLDARLTFET…GALNKLLAFN (222 aa)) are domain III, AAA+ region. ATP-binding residues include Gly210, Gly212, Lys213, and Thr214. The interval 385–506 (QLTGEPVTLE…EVLKRLALEA (122 aa)) is domain IV, binds dsDNA.

It belongs to the DnaA family. Oligomerizes as a right-handed, spiral filament on DNA at oriC.

The protein resides in the cytoplasm. Plays an essential role in the initiation and regulation of chromosomal replication. ATP-DnaA binds to the origin of replication (oriC) to initiate formation of the DNA replication initiation complex once per cell cycle. Binds the DnaA box (a 9 base pair repeat at the origin) and separates the double-stranded (ds)DNA. Forms a right-handed helical filament on oriC DNA; dsDNA binds to the exterior of the filament while single-stranded (ss)DNA is stabiized in the filament's interior. The ATP-DnaA-oriC complex binds and stabilizes one strand of the AT-rich DNA unwinding element (DUE), permitting loading of DNA polymerase. After initiation quickly degrades to an ADP-DnaA complex that is not apt for DNA replication. Binds acidic phospholipids. The protein is Chromosomal replication initiator protein DnaA of Xanthobacter autotrophicus (strain ATCC BAA-1158 / Py2).